The primary structure comprises 162 residues: Chemoreceptor glutamine deamidase CheD (162 aa).

It belongs to the CheD family. Forms a complex with CheC.

It catalyses the reaction L-glutaminyl-[protein] + H2O = L-glutamyl-[protein] + NH4(+). Functionally, deamidates glutamine residues to glutamate on methyl-accepting chemotaxis receptors (MCPs). CheD-mediated MCP deamidation is required for productive communication of the conformational signals of the chemoreceptors to the CheA kinase. This is Chemoreceptor glutamine deamidase CheD from Halalkalibacterium halodurans (strain ATCC BAA-125 / DSM 18197 / FERM 7344 / JCM 9153 / C-125) (Bacillus halodurans).